A 141-amino-acid chain; its full sequence is Putative pre-16S rRNA nuclease (141 aa).

The protein belongs to the YqgF nuclease family.

It is found in the cytoplasm. Its function is as follows. Could be a nuclease involved in processing of the 5'-end of pre-16S rRNA. This chain is Putative pre-16S rRNA nuclease, found in Desulforudis audaxviator (strain MP104C).